The sequence spans 162 residues: UPF0254 protein MTH1148 homolog (162 aa).

It belongs to the UPF0254 family.

The chain is UPF0254 protein MTH1148 homolog from Methanothermobacter thermautotrophicus (strain Winter) (Methanobacterium thermoautotrophicum).